The primary structure comprises 380 residues: Cytochrome b (380 aa).

4 helical membrane-spanning segments follow: residues 34–54 (FGSL…LLAA), 78–99 (WLIR…YLHI), 114–134 (WNTG…GYVL), and 179–199 (FFTL…IHLT). Residues His-84 and His-98 each contribute to the heme b site. Residues His-183 and His-197 each coordinate heme b. His-202 is an a ubiquinone binding site. The next 4 membrane-spanning stretches (helical) occupy residues 227–247 (LKDI…ALFS), 289–309 (LGGV…PLLH), 321–341 (FSQL…WVGS), and 348–368 (FIII…ILFP).

It belongs to the cytochrome b family. In terms of assembly, the cytochrome bc1 complex contains 11 subunits: 3 respiratory subunits (MT-CYB, CYC1 and UQCRFS1), 2 core proteins (UQCRC1 and UQCRC2) and 6 low-molecular weight proteins (UQCRH/QCR6, UQCRB/QCR7, UQCRQ/QCR8, UQCR10/QCR9, UQCR11/QCR10 and a cleavage product of UQCRFS1). This cytochrome bc1 complex then forms a dimer. Requires heme b as cofactor.

Its subcellular location is the mitochondrion inner membrane. In terms of biological role, component of the ubiquinol-cytochrome c reductase complex (complex III or cytochrome b-c1 complex) that is part of the mitochondrial respiratory chain. The b-c1 complex mediates electron transfer from ubiquinol to cytochrome c. Contributes to the generation of a proton gradient across the mitochondrial membrane that is then used for ATP synthesis. This Antigone rubicunda (Brolga crane) protein is Cytochrome b (MT-CYB).